The following is a 618-amino-acid chain: Nuclear cap-binding protein subunit 3 (618 aa).

The interval 1 to 53 is disordered; the sequence is MAAVRGLRVSVKAGGGAEPEPMEVEEGEVEAAAGRTSPVEATADQTSPREVVP. Acidic residues predominate over residues 20 to 29; the sequence is EPMEVEEGEV. Positions 117 to 178 are RNA recognition motif (RRM) domain; sequence ETLYICGVDE…LSSKPTNEKG (62 aa). The short motif at 146-149 is the WLDD motif; essential for 7-methylguanosine-containing mRNA cap binding element; that stretch reads WLDD. 3 disordered regions span residues 170 to 250, 342 to 366, and 426 to 618; these read SSKP…DLRP, PEEP…DDRV, and QLKT…DTDS. Over residues 174 to 188 the composition is skewed to basic and acidic residues; it reads TNEKGQRKKDGEHRS. Residues 205–223 are compositionally biased toward acidic residues; the sequence is DETEEGEVEEDNPNDAEVE. A compositionally biased stretch (polar residues) spans 231–240; that stretch reads PPETLSQAEQ. Acidic residues predominate over residues 344 to 365; the sequence is EPIEEEEEEEEEEEEDMDEDDR. Polar residues predominate over residues 436–450; the sequence is SDSAGNSVKSRIGSK. Residues 451-468 show a composition bias toward basic and acidic residues; that stretch reads SHSEKPADVRLILEEKRQ. Low complexity predominate over residues 469 to 481; sequence STASRQQSSSSGK. Basic and acidic residues-rich tracts occupy residues 507 to 517, 550 to 562, and 583 to 596; these read SRREPLSDVHS, PKEK…KSGE, and IKEK…KSRL. The segment covering 609 to 618 has biased composition (low complexity); sequence ESSSGSDTDS.

It belongs to the NCBP3 family. As to quaternary structure, component of an alternative cap-binding complex (CBC) composed of NCBP1/CBP80 and NCBP3.

It is found in the nucleus. It localises to the cytoplasm. Functionally, associates with NCBP1/CBP80 to form an alternative cap-binding complex (CBC) which plays a key role in mRNA export. NCBP3 serves as adapter protein linking the capped RNAs (m7GpppG-capped RNA) to NCBP1/CBP80. Unlike the conventional CBC with NCBP2 which binds both small nuclear RNA (snRNA) and messenger (mRNA) and is involved in their export from the nucleus, the alternative CBC with NCBP3 does not bind snRNA and associates only with mRNA thereby playing a role in only mRNA export. This Xenopus laevis (African clawed frog) protein is Nuclear cap-binding protein subunit 3.